The sequence spans 118 residues: Ribulose bisphosphate carboxylase small subunit (118 aa).

This sequence belongs to the RuBisCO small chain family. In terms of assembly, heterohexadecamer of 8 large and 8 small subunits.

RuBisCO catalyzes two reactions: the carboxylation of D-ribulose 1,5-bisphosphate, the primary event in carbon dioxide fixation, as well as the oxidative fragmentation of the pentose substrate. Both reactions occur simultaneously and in competition at the same active site. Although the small subunit is not catalytic it is essential for maximal activity. The polypeptide is Ribulose bisphosphate carboxylase small subunit (Rhodobacter capsulatus (Rhodopseudomonas capsulata)).